The sequence spans 975 residues: Exportin-2 (975 aa).

The Importin N-terminal domain maps to 29-105 (AEKLLESTEL…KTLIVTLMLH (77 aa)).

Belongs to the XPO2/CSE1 family. Binds with high affinity to importin-alpha only in the presence of RanGTP.

Its subcellular location is the cytoplasm. It is found in the nucleus. In terms of biological role, export receptor for importin alpha. Mediates importin-alpha re-export from the nucleus to the cytoplasm after import substrates have been released into the nucleoplasm. The sequence is that of Exportin-2 from Drosophila melanogaster (Fruit fly).